A 380-amino-acid chain; its full sequence is Epoxyqueuosine reductase (380 aa).

D134 functions as the Proton donor in the catalytic mechanism. The region spanning 178–208 (FPPDKPIEDQCGGCTKCIDICPTGALIQGGQ) is the 4Fe-4S ferredoxin-type 1 domain. Positions 188, 191, 194, 198, 214, 240, 243, and 247 each coordinate [4Fe-4S] cluster. The 4Fe-4S ferredoxin-type 2 domain occupies 226 to 258 (PEEYRDKIGNRIYGCDTCQTVCPKNKGMDFHNH).

It belongs to the QueG family. Monomer. The cofactor is cob(II)alamin. [4Fe-4S] cluster serves as cofactor.

It is found in the cytoplasm. The catalysed reaction is epoxyqueuosine(34) in tRNA + AH2 = queuosine(34) in tRNA + A + H2O. Its pathway is tRNA modification; tRNA-queuosine biosynthesis. In terms of biological role, catalyzes the conversion of epoxyqueuosine (oQ) to queuosine (Q), which is a hypermodified base found in the wobble positions of tRNA(Asp), tRNA(Asn), tRNA(His) and tRNA(Tyr). The sequence is that of Epoxyqueuosine reductase from Bacillus cereus (strain ATCC 14579 / DSM 31 / CCUG 7414 / JCM 2152 / NBRC 15305 / NCIMB 9373 / NCTC 2599 / NRRL B-3711).